The sequence spans 516 residues: 2-isopropylmalate synthase (516 aa).

The region spanning 5–268 is the Pyruvate carboxyltransferase domain; sequence LIIFDTTLRD…DLGIDTTQIV (264 aa). Residues Asp-14, His-202, His-204, and Asn-239 each contribute to the Mn(2+) site. The segment at 395–516 is regulatory domain; it reads KFVSLSQHSE…DKLNPQRADI (122 aa).

The protein belongs to the alpha-IPM synthase/homocitrate synthase family. LeuA type 1 subfamily. As to quaternary structure, homodimer. The cofactor is Mn(2+).

It is found in the cytoplasm. It carries out the reaction 3-methyl-2-oxobutanoate + acetyl-CoA + H2O = (2S)-2-isopropylmalate + CoA + H(+). It participates in amino-acid biosynthesis; L-leucine biosynthesis; L-leucine from 3-methyl-2-oxobutanoate: step 1/4. In terms of biological role, catalyzes the condensation of the acetyl group of acetyl-CoA with 3-methyl-2-oxobutanoate (2-ketoisovalerate) to form 3-carboxy-3-hydroxy-4-methylpentanoate (2-isopropylmalate). In Paraburkholderia phymatum (strain DSM 17167 / CIP 108236 / LMG 21445 / STM815) (Burkholderia phymatum), this protein is 2-isopropylmalate synthase.